The following is a 143-amino-acid chain: Large-conductance mechanosensitive channel (143 aa).

3 helical membrane passes run 21–41, 44–64, and 86–106; these read VGVIIGAAFGKIVDSIVADII, VVGLVFGKLDFSNLYVVLGTV, and GNFITIAVNFVILAFIIFMMV.

Belongs to the MscL family. Homopentamer.

It is found in the cell inner membrane. Its function is as follows. Channel that opens in response to stretch forces in the membrane lipid bilayer. May participate in the regulation of osmotic pressure changes within the cell. The chain is Large-conductance mechanosensitive channel from Variovorax paradoxus (strain S110).